The primary structure comprises 121 residues: MNNAPHLYFAWQQLVEKSQLMLRLATEEQWDELITSEMAYVNAVQEIAHLTEEVAPSTTMQEQLRPMLRLILDNESKVKQLLQIRMDELAKLVGQSSVQKSVLSAYGDQGGFVLAPQDNLF.

A required for homodimerization region spans residues 1 to 50; it reads MNNAPHLYFAWQQLVEKSQLMLRLATEEQWDELITSEMAYVNAVQEIAHL. A fliD binding region spans residues 60–98; that stretch reads MQEQLRPMLRLILDNESKVKQLLQIRMDELAKLVGQSSV.

Belongs to the FliT family. As to quaternary structure, homodimer. Interacts with FliD and FlhC.

The protein resides in the cytoplasm. The protein localises to the cytosol. Functionally, dual-function protein that regulates the transcription of class 2 flagellar operons and that also acts as an export chaperone for the filament-capping protein FliD. As a transcriptional regulator, acts as an anti-FlhDC factor; it directly binds FlhC, thus inhibiting the binding of the FlhC/FlhD complex to class 2 promoters, resulting in decreased expression of class 2 flagellar operons. As a chaperone, effects FliD transition to the membrane by preventing its premature polymerization, and by directing it to the export apparatus. This is Flagellar protein FliT from Escherichia coli (strain 55989 / EAEC).